A 201-amino-acid polypeptide reads, in one-letter code: Ras-related protein Rab-9A (201 aa).

A2 is subject to N-acetylalanine. Residues G17, V18, G19, K20, S21, S22, D33, S34, H38, and T39 each contribute to the GTP site. Position 21 (S21) interacts with Mg(2+). The short motif at 31-42 (KFDSQLFHTIGV) is the Switch 1 element. S34 carries the post-translational modification Phosphoserine. Mg(2+) contacts are provided by T39 and D62. A Switch 2 motif is present at residues 64–78 (AGQERFRSLRTPFYR). G65, N124, K125, D127, A155, and K156 together coordinate GTP. S179 carries the post-translational modification Phosphoserine. T187 is subject to Phosphothreonine. S-geranylgeranyl cysteine attachment occurs at residues C200 and C201.

It belongs to the small GTPase superfamily. Rab family. In terms of assembly, interacts (preferentially in its GTP-bound form) with GCC2 (via its GRIP domain). Interacts (GTP-bound form) with SGSM1; the GDP-bound form has much lower affinity for SGSM1. Interacts with SGSM2. The GTP-bound form but not the GDP-bound form interacts with HPS4. The GTP-bound form but not the GDP-bound form interacts with BLOC-3 complex (heterodimer of HPS1 and HPS4) but does not interact with HPS1 alone. Interacts (GTP-bound form) with NDE1; two RAB9A-GTP molecules lie on the opposite sides of the NDE1 homodimer; the interaction leads to RAB9A-dynein motor tethering. Interacts (GTP-bound form) with NDEL1. It depends on Mg(2+) as a cofactor.

It is found in the cell membrane. The protein resides in the endoplasmic reticulum membrane. It localises to the golgi apparatus membrane. Its subcellular location is the late endosome. The protein localises to the cytoplasmic vesicle. It is found in the phagosome membrane. The protein resides in the phagosome. It localises to the cytoplasmic vesicle membrane. Its subcellular location is the melanosome. It catalyses the reaction GTP + H2O = GDP + phosphate + H(+). With respect to regulation, regulated by guanine nucleotide exchange factors (GEFs) which promote the exchange of bound GDP for free GTP. Regulated by GTPase activating proteins (GAPs) which increase the GTP hydrolysis activity. Inhibited by GDP dissociation inhibitors (GDIs). Its function is as follows. The small GTPases Rab are key regulators of intracellular membrane trafficking, from the formation of transport vesicles to their fusion with membranes. Rabs cycle between an inactive GDP-bound form and an active GTP-bound form that is able to recruit to membranes different sets of downstream effectors directly responsible for vesicle formation, movement, tethering and fusion. RAB9A is involved in the transport of proteins between the endosomes and the trans-Golgi network (TGN). Specifically uses NDE1/NDEL1 as an effector to interact with the dynein motor complex in order to control retrograde trafficking of RAB9-associated late endosomes to the TGN. Involved in the recruitment of SGSM2 to melanosomes and is required for the proper trafficking of melanogenic enzymes TYR, TYRP1 and DCT/TYRP2 to melanosomes in melanocytes. This chain is Ras-related protein Rab-9A, found in Mus musculus (Mouse).